The primary structure comprises 128 residues: NADH-quinone oxidoreductase subunit A (128 aa).

3 helical membrane-spanning segments follow: residues 5-25 (IPIL…VVIA), 72-92 (LTAM…PWAV), and 100-120 (FALV…AYVW).

It belongs to the complex I subunit 3 family. As to quaternary structure, NDH-1 is composed of 14 different subunits. Subunits NuoA, H, J, K, L, M, N constitute the membrane sector of the complex.

It localises to the cell membrane. It catalyses the reaction a quinone + NADH + 5 H(+)(in) = a quinol + NAD(+) + 4 H(+)(out). NDH-1 shuttles electrons from NADH, via FMN and iron-sulfur (Fe-S) centers, to quinones in the respiratory chain. The immediate electron acceptor for the enzyme in this species is believed to be a menaquinone. Couples the redox reaction to proton translocation (for every two electrons transferred, four hydrogen ions are translocated across the cytoplasmic membrane), and thus conserves the redox energy in a proton gradient. This chain is NADH-quinone oxidoreductase subunit A, found in Mycobacterium bovis (strain ATCC BAA-935 / AF2122/97).